The chain runs to 146 residues: Aminoglycoside N(6')-acetyltransferase type 1 (146 aa).

An N-acetyltransferase domain is found at 1–146 (MNIMPVSESL…RVVYFKKHIG (146 aa)). Positions 22, 25, 66, and 79 each coordinate substrate. Residue 81 to 83 (IYV) coordinates acetyl-CoA. Asp115 provides a ligand contact to substrate. Asn120 contributes to the acetyl-CoA binding site. Glu136 contributes to the substrate binding site.

In terms of assembly, homodimer.

It carries out the reaction kanamycin B + acetyl-CoA = N(6')-acetylkanamycin B + CoA + H(+). Catalyzes the transfer of an acetyl group from acetyl-CoA to the 6'-amino group of aminoglycoside molecules conferring resistance to antibiotics containing the purpurosamine ring including amikacin, kanamycin, tobramycin and netilmicin. This is Aminoglycoside N(6')-acetyltransferase type 1 from Acinetobacter genomosp. 13.